The sequence spans 564 residues: Proline--tRNA ligase (564 aa).

This sequence belongs to the class-II aminoacyl-tRNA synthetase family. ProS type 1 subfamily. In terms of assembly, homodimer.

The protein resides in the cytoplasm. The enzyme catalyses tRNA(Pro) + L-proline + ATP = L-prolyl-tRNA(Pro) + AMP + diphosphate. In terms of biological role, catalyzes the attachment of proline to tRNA(Pro) in a two-step reaction: proline is first activated by ATP to form Pro-AMP and then transferred to the acceptor end of tRNA(Pro). As ProRS can inadvertently accommodate and process non-cognate amino acids such as alanine and cysteine, to avoid such errors it has two additional distinct editing activities against alanine. One activity is designated as 'pretransfer' editing and involves the tRNA(Pro)-independent hydrolysis of activated Ala-AMP. The other activity is designated 'posttransfer' editing and involves deacylation of mischarged Ala-tRNA(Pro). The misacylated Cys-tRNA(Pro) is not edited by ProRS. The chain is Proline--tRNA ligase from Bacillus velezensis (strain DSM 23117 / BGSC 10A6 / LMG 26770 / FZB42) (Bacillus amyloliquefaciens subsp. plantarum).